The primary structure comprises 290 residues: Feruloyl esterase D (290 aa).

Residues 1 to 25 (MAGLHSRLTTFLLLLLSALPAIAAA) form the signal peptide. Positions 260 to 280 (HGGDHNPSQRDPGQNDPFAPR) are disordered.

This sequence belongs to the serine esterase family.

Its subcellular location is the secreted. The enzyme catalyses feruloyl-polysaccharide + H2O = ferulate + polysaccharide.. Involved in degradation of plant cell walls. Hydrolyzes the feruloyl-arabinose ester bond in arabinoxylans as well as the feruloyl-galactose and feruloyl-arabinose ester bonds in pectin. Active against methyl esters of ferulate (MFA), sinapate (MSA), caffeate (MCA) and p-coumarate (MpCA). This Neurospora crassa (strain ATCC 24698 / 74-OR23-1A / CBS 708.71 / DSM 1257 / FGSC 987) protein is Feruloyl esterase D.